A 177-amino-acid chain; its full sequence is ATP synthase subunit delta (177 aa).

It belongs to the ATPase delta chain family. In terms of assembly, F-type ATPases have 2 components, F(1) - the catalytic core - and F(0) - the membrane proton channel. F(1) has five subunits: alpha(3), beta(3), gamma(1), delta(1), epsilon(1). F(0) has three main subunits: a(1), b(2) and c(10-14). The alpha and beta chains form an alternating ring which encloses part of the gamma chain. F(1) is attached to F(0) by a central stalk formed by the gamma and epsilon chains, while a peripheral stalk is formed by the delta and b chains.

It is found in the cell inner membrane. Its function is as follows. F(1)F(0) ATP synthase produces ATP from ADP in the presence of a proton or sodium gradient. F-type ATPases consist of two structural domains, F(1) containing the extramembraneous catalytic core and F(0) containing the membrane proton channel, linked together by a central stalk and a peripheral stalk. During catalysis, ATP synthesis in the catalytic domain of F(1) is coupled via a rotary mechanism of the central stalk subunits to proton translocation. In terms of biological role, this protein is part of the stalk that links CF(0) to CF(1). It either transmits conformational changes from CF(0) to CF(1) or is implicated in proton conduction. The sequence is that of ATP synthase subunit delta from Neisseria meningitidis serogroup A / serotype 4A (strain DSM 15465 / Z2491).